A 233-amino-acid chain; its full sequence is TATA-box-binding protein 1 (233 aa).

Repeat copies occupy residues 58 to 134 and 148 to 225.

It belongs to the TBP family. As to quaternary structure, belongs to the TFIID complex together with the TBP-associated factors (TAFs). Binds DNA as monomer.

Its subcellular location is the nucleus. General transcription factor that functions at the core of the DNA-binding multiprotein factor TFIID. Binding of TFIID to the TATA box is the initial transcriptional step of the pre-initiation complex (PIC), playing a role in the activation of eukaryotic genes transcribed by RNA polymerase II. The protein is TATA-box-binding protein 1 (TBP1) of Triticum aestivum (Wheat).